The sequence spans 37 residues: Large ribosomal subunit protein bL36 (37 aa).

The protein belongs to the bacterial ribosomal protein bL36 family.

The polypeptide is Large ribosomal subunit protein bL36 (Helicobacter pylori (strain ATCC 700392 / 26695) (Campylobacter pylori)).